A 449-amino-acid chain; its full sequence is Probable mitochondrial chaperone bcs1 (449 aa).

Residues methionine 1–serine 20 are Mitochondrial intermembrane-facing. A helical membrane pass occupies residues glycine 21–leucine 41. Residues arginine 42–valine 449 lie on the Mitochondrial matrix side of the membrane. Glycine 249–threonine 256 is an ATP binding site.

This sequence belongs to the AAA ATPase family. BCS1 subfamily.

The protein resides in the mitochondrion inner membrane. It catalyses the reaction ATP + H2O = ADP + phosphate + H(+). Chaperone necessary for the incorporation of Rieske iron-sulfur protein rip1 into the mitochondrial respiratory chain complex III. The protein is Probable mitochondrial chaperone bcs1 of Schizosaccharomyces pombe (strain 972 / ATCC 24843) (Fission yeast).